A 67-amino-acid chain; its full sequence is Conotoxin Pu5.1 (67 aa).

The N-terminal stretch at 1–22 is a signal peptide; sequence MRCVPVFVILLLLIASTPSVDA. A propeptide spanning residues 23–51 is cleaved from the precursor; that stretch reads RPNPKDDVPLASFHEDANGILQMLWKKGR. Residue W63 is modified to Tryptophan amide.

This sequence belongs to the conotoxin T superfamily. Post-translationally, contains 2 disulfide bonds that can be either 'C1-C3, C2-C4' or 'C1-C4, C2-C3', since these disulfide connectivities have been observed for conotoxins with cysteine framework V (for examples, see AC P0DQQ7 and AC P81755). In terms of tissue distribution, expressed by the venom duct.

The protein resides in the secreted. The sequence is that of Conotoxin Pu5.1 from Conus pulicarius (Flea-bitten cone).